The sequence spans 232 residues: Large ribosomal subunit protein uL1 (232 aa).

This sequence belongs to the universal ribosomal protein uL1 family. In terms of assembly, part of the 50S ribosomal subunit.

In terms of biological role, binds directly to 23S rRNA. The L1 stalk is quite mobile in the ribosome, and is involved in E site tRNA release. Protein L1 is also a translational repressor protein, it controls the translation of the L11 operon by binding to its mRNA. This Chlamydia trachomatis serovar D (strain ATCC VR-885 / DSM 19411 / UW-3/Cx) protein is Large ribosomal subunit protein uL1.